A 436-amino-acid polypeptide reads, in one-letter code: DNA primase DnaG (436 aa).

The region spanning 169–243 is the Toprim domain; sequence DSIIVVEGRA…DIDYVARAPY (75 aa). Mg(2+)-binding residues include Glu175, Asp217, and Asp219.

Belongs to the archaeal DnaG primase family. In terms of assembly, forms a ternary complex with MCM helicase and DNA. It depends on Mg(2+) as a cofactor.

It catalyses the reaction ssDNA + n NTP = ssDNA/pppN(pN)n-1 hybrid + (n-1) diphosphate.. Functionally, RNA polymerase that catalyzes the synthesis of short RNA molecules used as primers for DNA polymerase during DNA replication. This chain is DNA primase DnaG, found in Methanococcus maripaludis (strain DSM 14266 / JCM 13030 / NBRC 101832 / S2 / LL).